Reading from the N-terminus, the 123-residue chain is Phospholipase A2 (123 aa).

Intrachain disulfides connect C11–C77, C27–C123, C29–C45, C44–C105, C51–C98, C61–C91, and C84–C96. Ca(2+)-binding residues include Y28, G30, and G32. H48 is an active-site residue. D49 is a binding site for Ca(2+). D99 is an active-site residue.

It belongs to the phospholipase A2 family. Monomer or homodimer. Requires Ca(2+) as cofactor. Post-translationally, activated by trypsin cleavage in the duodenum. Can also be activated by thrombin or autocatalytically.

The protein resides in the secreted. The catalysed reaction is a 1,2-diacyl-sn-glycero-3-phosphocholine + H2O = a 1-acyl-sn-glycero-3-phosphocholine + a fatty acid + H(+). It catalyses the reaction 1,2-ditetradecanoyl-sn-glycero-3-phosphocholine + H2O = 1-tetradecanoyl-sn-glycero-3-phosphocholine + tetradecanoate + H(+). The enzyme catalyses 1,2-dihexadecanoyl-sn-glycero-3-phosphocholine + H2O = 1-hexadecanoyl-sn-glycero-3-phosphocholine + hexadecanoate + H(+). It carries out the reaction 1-hexadecanoyl-2-(9Z-octadecenoyl)-sn-glycero-3-phosphocholine + H2O = 1-hexadecanoyl-sn-glycero-3-phosphocholine + (9Z)-octadecenoate + H(+). The catalysed reaction is 1-hexadecanoyl-2-(5Z,8Z,11Z,14Z-eicosatetraenoyl)-sn-glycero-3-phosphocholine + H2O = 1-hexadecanoyl-sn-glycero-3-phosphocholine + (5Z,8Z,11Z,14Z)-eicosatetraenoate + H(+). It catalyses the reaction 1-hexadecanoyl-2-(9Z-octadecenoyl)-sn-glycero-3-phospho-(1'-sn-glycerol) + H2O = 1-hexadecanoyl-sn-glycero-3-phospho-(1'-sn-glycerol) + (9Z)-octadecenoate + H(+). The enzyme catalyses N-hexadecanoyl-1,2-di-(9Z-octadecenoyl)-sn-glycero-3-phosphoethanolamine + H2O = N-hexadecanoyl-1-(9Z-octadecenoyl)-sn-glycero-3-phosphoethanolamine + (9Z)-octadecenoate + H(+). It carries out the reaction 1-hexadecanoyl-2-(9Z,12Z-octadecadienoyl)-sn-glycero-3-phosphoethanolamine + H2O = 1-hexadecanoyl-sn-glycero-3-phosphoethanolamine + (9Z,12Z)-octadecadienoate + H(+). The catalysed reaction is N,1-dihexadecanoyl-2-(9Z,12Z-octadecadienoyl)-sn-glycero-3-phosphoethanolamine + H2O = N,1-dihexadecanoyl-sn-glycero-3-phosphoethanolamine + (9Z,12Z)-octadecadienoate + H(+). Its function is as follows. Secretory calcium-dependent phospholipase A2 that primarily targets dietary phospholipids in the intestinal tract. Hydrolyzes the ester bond of the fatty acyl group attached at sn-2 position of phospholipids (phospholipase A2 activity) with preference for phosphatidylethanolamines and phosphatidylglycerols over phosphatidylcholines. May play a role in the biosynthesis of N-acyl ethanolamines that regulate energy metabolism and inflammation in the intestinal tract. Hydrolyzes N-acyl phosphatidylethanolamines to N-acyl lysophosphatidylethanolamines, which are further cleaved by a lysophospholipase D to release N-acyl ethanolamines. May act in an autocrine and paracrine manner. Has anti-helminth activity in a process regulated by gut microbiota. Upon helminth infection of intestinal epithelia, directly affects phosphatidylethanolamine contents in the membrane of helminth larvae, likely controlling an array of phospholipid-mediated cellular processes such as membrane fusion and cell division while providing for better immune recognition, ultimately reducing larvae integrity and infectivity. The sequence is that of Phospholipase A2 (PLA2G1B) from Ovis aries (Sheep).